Reading from the N-terminus, the 170-residue chain is FMRFamide-like neuropeptides 6 (170 aa).

An N-terminal signal peptide occupies residues 1–19 (MNSRGLILTLGVVIAVAFA). Q20 is subject to Pyrrolidone carboxylic acid. F39 carries the post-translational modification Phenylalanine amide. Residues 42–51 (SDGGNPMEME) constitute a propeptide that is removed on maturation. F60 carries the post-translational modification Phenylalanine amide. A propeptide spanning residues 63 to 81 (RSSGGDEQELVGGDDIDME) is cleaved from the precursor. F90 carries the phenylalanine amide modification. The propeptide occupies 93–104 (RSGPQEDDMPME). Residue F113 is modified to Phenylalanine amide. The propeptide occupies 116–136 (RSSDMEVIGNEGVDGDAHDLF). Position 145 is a phenylalanine amide (F145). The propeptide occupies 148-159 (RSMGEEEDHDMM). The segment at 150–170 (MGEEEDHDMMKRKSAYMRFGR) is disordered. The span at 159 to 170 (MKRKSAYMRFGR) shows a compositional bias: basic residues. Residue F168 is modified to Phenylalanine amide.

Belongs to the FARP (FMRFamide related peptide) family. Each flp gene is expressed in a distinct set of neurons. Flp-6 is expressed in the ASE sensory neurons, AFD, ASG, PVT and I1 neurons.

The protein resides in the secreted. Its function is as follows. FMRFamides and FMRFamide-like peptides are neuropeptides. KSAYMRF-amide has an excitatory effect on dissected pharyngeal myogenic muscle system. This chain is FMRFamide-like neuropeptides 6, found in Caenorhabditis elegans.